The chain runs to 420 residues: Glucose-1-phosphate adenylyltransferase (420 aa).

Residues Tyr107, Gly173, 188–189, and Ser206 each bind alpha-D-glucose 1-phosphate; that span reads EK.

The protein belongs to the bacterial/plant glucose-1-phosphate adenylyltransferase family. Homotetramer.

It catalyses the reaction alpha-D-glucose 1-phosphate + ATP + H(+) = ADP-alpha-D-glucose + diphosphate. It participates in glycan biosynthesis; glycogen biosynthesis. Involved in the biosynthesis of ADP-glucose, a building block required for the elongation reactions to produce glycogen. Catalyzes the reaction between ATP and alpha-D-glucose 1-phosphate (G1P) to produce pyrophosphate and ADP-Glc. This chain is Glucose-1-phosphate adenylyltransferase, found in Shewanella sp. (strain MR-4).